A 492-amino-acid chain; its full sequence is Mitochondrial distribution and morphology protein 12 (492 aa).

Residues 1–492 enclose the SMP-LTD domain; that stretch reads MSIDLNWETV…VYPSFWTFLV (492 aa). Disordered stretches follow at residues 68-158, 199-301, and 379-434; these read DFYE…STPG, LEGH…GHPR, and AVGG…GSGN. Residues 78–90 are compositionally biased toward acidic residues; it reads VASDDSEGEEDAV. Over residues 130–139 the composition is skewed to gly residues; it reads SPGGPGGPGM. Residues 246–257 are compositionally biased toward low complexity; the sequence is LNPNSLAPPSSS. Residues 270–285 are compositionally biased toward polar residues; that stretch reads TTPAPGSATALSGSNE. The span at 387–400 shows a compositional bias: low complexity; that stretch reads GLSSPGEGPSQAQG. The span at 401–415 shows a compositional bias: gly residues; it reads QGQGQGQGQGQGQTP. Positions 416–428 are enriched in low complexity; the sequence is GAGQQKQQKKQAG.

It belongs to the MDM12 family. In terms of assembly, component of the ER-mitochondria encounter structure (ERMES) or MDM complex, composed of MMM1, MDM10, MDM12 and MDM34. An MMM1 homodimer associates with one molecule of MDM12 on each side in a pairwise head-to-tail manner, and the SMP-LTD domains of MMM1 and MDM12 generate a continuous hydrophobic tunnel for phospholipid trafficking.

It is found in the mitochondrion outer membrane. It localises to the endoplasmic reticulum membrane. Component of the ERMES/MDM complex, which serves as a molecular tether to connect the endoplasmic reticulum (ER) and mitochondria. Components of this complex are involved in the control of mitochondrial shape and protein biogenesis, and function in nonvesicular lipid trafficking between the ER and mitochondria. MDM12 is required for the interaction of the ER-resident membrane protein MMM1 and the outer mitochondrial membrane-resident beta-barrel protein MDM10. The MDM12-MMM1 subcomplex functions in the major beta-barrel assembly pathway that is responsible for biogenesis of all mitochondrial outer membrane beta-barrel proteins, and acts in a late step after the SAM complex. The MDM10-MDM12-MMM1 subcomplex further acts in the TOM40-specific pathway after the action of the MDM12-MMM1 complex. Essential for establishing and maintaining the structure of mitochondria and maintenance of mtDNA nucleoids. This Chaetomium globosum (strain ATCC 6205 / CBS 148.51 / DSM 1962 / NBRC 6347 / NRRL 1970) (Soil fungus) protein is Mitochondrial distribution and morphology protein 12.